The chain runs to 337 residues: Glucose transporter 2C (337 aa).

The disordered stretch occupies residues 1 to 22 (MTERRDNVSHAPDAIEGPNDGA). Topologically, residues 1–43 (MTERRDNVSHAPDAIEGPNDGAHAEDTSPGFFSLENLGVAQVQ) are cytoplasmic. Residues 44 to 64 (VVGGTLNGFSIGFVAVYILLY) traverse the membrane as a helical segment. Topologically, residues 65 to 119 (EVATNCSLFKTTEACKAVGSYGCEWKDTEVCSWKKECDSDSDGVNPCESLIGYSS) are extracellular. N69 carries N-linked (GlcNAc...) asparagine glycosylation. The helical transmembrane segment at 120–140 (LYSGIFASAMIVGSMVGSIIA) threads the bilayer. Residues 141 to 152 (GKCITMFGLKKS) lie on the Cytoplasmic side of the membrane. The chain crosses the membrane as a helical span at residues 153–173 (FIIVGVMSVVASALNHISVAT). Over 174–175 (NE) the chain is Extracellular. Residues 176–196 (FWVLCAGRVLMGIGLGVVCVI) form a helical membrane-spanning segment. Over 197–214 (CPMYVNENAHPKLSKVDG) the chain is Cytoplasmic. Residues 215–235 (VLFQVFITFGIMLAAMLGLIL) traverse the membrane as a helical segment. Topologically, residues 236 to 250 (DKTVNYDNDPDMAGR) are extracellular. The chain crosses the membrane as a helical span at residues 251-271 (FHGFCAVSSVLSVAMFLVGMF). The Cytoplasmic portion of the chain corresponds to 272-300 (LRESTATFSQDDDGKADGGMDPNEYGWGQ). A helical membrane pass occupies residues 301–321 (MLWPLFMGAVTAGTLQLTGIN). Residues 322–337 (AVMNYAPKITENLGMD) are Extracellular-facing.

The protein belongs to the major facilitator superfamily. Sugar transporter (TC 2.A.1.1) family.

The protein localises to the membrane. In terms of biological role, facilitative glucose transporter. This is Glucose transporter 2C (THT2C) from Trypanosoma brucei brucei.